We begin with the raw amino-acid sequence, 285 residues long: N(G),N(G)-dimethylarginine dimethylaminohydrolase 1 (285 aa).

A2 carries the post-translational modification N-acetylalanine. Substrate is bound at residue L30. S33 is subject to Phosphoserine. 5 residues coordinate substrate: D73, E78, D79, R98, and R145. Residue H173 is the Proton donor of the active site. An S-nitrosocysteine modification is found at C222. V268 is a substrate binding site. At C274 the chain carries S-nitrosocysteine. C274 (nucleophile) is an active-site residue. C274 contacts Zn(2+).

Belongs to the DDAH family. Monomer. Detected in red blood cells (at protein level). Widely distributed, high amounts found in kidney, brain, aorta and pancreas.

The catalysed reaction is N(omega),N(omega)-dimethyl-L-arginine + H2O = dimethylamine + L-citrulline. It carries out the reaction N(omega)-methyl-L-arginine + H2O = L-citrulline + methylamine. Its activity is regulated as follows. Inhibited by zinc ions. Functionally, hydrolyzes N(G),N(G)-dimethyl-L-arginine (ADMA) and N(G)-monomethyl-L-arginine (MMA) which act as inhibitors of NOS. Has therefore a role in the regulation of nitric oxide generation. The chain is N(G),N(G)-dimethylarginine dimethylaminohydrolase 1 (Ddah1) from Rattus norvegicus (Rat).